Reading from the N-terminus, the 100-residue chain is uncharacterized protein (100 aa).

This is an uncharacterized protein from Mycoplasma genitalium (strain ATCC 33530 / DSM 19775 / NCTC 10195 / G37) (Mycoplasmoides genitalium).